The primary structure comprises 116 residues: Large ribosomal subunit protein bL21c (116 aa).

Belongs to the bacterial ribosomal protein bL21 family. In terms of assembly, part of the 50S ribosomal subunit.

The protein localises to the plastid. The protein resides in the chloroplast. Functionally, this protein binds to 23S rRNA. The chain is Large ribosomal subunit protein bL21c from Marchantia polymorpha (Common liverwort).